A 288-amino-acid polypeptide reads, in one-letter code: Polyamine aminopropyltransferase (288 aa).

The PABS domain maps to 9–238; sequence ETLHDQFGQY…GIMTFAWATD (230 aa). Q33 is an S-methyl-5'-thioadenosine binding site. Spermidine-binding residues include H64 and D88. Residues E108 and 140–141 contribute to the S-methyl-5'-thioadenosine site; that span reads DG. D158 acts as the Proton acceptor in catalysis. Spermidine is bound at residue 158 to 161; it reads DCTD. An S-methyl-5'-thioadenosine-binding site is contributed by P165.

This sequence belongs to the spermidine/spermine synthase family. Homodimer or homotetramer.

The protein localises to the cytoplasm. It catalyses the reaction S-adenosyl 3-(methylsulfanyl)propylamine + putrescine = S-methyl-5'-thioadenosine + spermidine + H(+). It participates in amine and polyamine biosynthesis; spermidine biosynthesis; spermidine from putrescine: step 1/1. Catalyzes the irreversible transfer of a propylamine group from the amino donor S-adenosylmethioninamine (decarboxy-AdoMet) to putrescine (1,4-diaminobutane) to yield spermidine. The protein is Polyamine aminopropyltransferase of Escherichia coli (strain ATCC 8739 / DSM 1576 / NBRC 3972 / NCIMB 8545 / WDCM 00012 / Crooks).